A 575-amino-acid chain; its full sequence is Acyloxyacyl hydrolase (575 aa).

The first 25 residues, 1–25, serve as a signal peptide directing secretion; sequence MKSPWRILVVSPLLLLPLHSSTSRA. The propeptide occupies 26–34; it reads HDNQPGTIR. One can recognise a Saposin B-type domain in the interval 36 to 117; sequence DHYTCVGCVL…HTLEFCKQEP (82 aa). The tract at residues 37-69 is important for enzyme activity, localization to cytoplasmic vesicles, and protein stability; that stretch reads HYTCVGCVLVVSVIEQLAQVHNSTVQASMERLC. Intrachain disulfides connect cysteine 40/cysteine 113, cysteine 43/cysteine 107, cysteine 69/cysteine 82, cysteine 122/cysteine 453, cysteine 159/cysteine 168, cysteine 205/cysteine 229, cysteine 248/cysteine 328, and cysteine 375/cysteine 459. Asparagine 58 carries N-linked (GlcNAc...) asparagine glycosylation. A lipopolysaccharide binding region spans residues 172 to 176; that stretch reads KLAIK. Ca(2+) is bound by residues aspartate 183, aspartate 185, aspartate 187, tyrosine 189, aspartate 204, asparagine 206, aspartate 207, aspartate 209, valine 212, aspartate 222, aspartate 226, asparagine 228, asparagine 230, isoleucine 232, and glutamate 244. Asparagine 206 is a glycosylation site (N-linked (GlcNAc...) asparagine). Serine 262 is a catalytic residue. The N-linked (GlcNAc...) asparagine glycan is linked to asparagine 466.

Heterodimer of the large and small subunits; disulfide-linked. Ca(2+) serves as cofactor. In terms of processing, cleaved into a large and a small subunit. The small subunit is N-glycosylated.

Its subcellular location is the secreted. The protein localises to the cytoplasmic vesicle. The enzyme catalyses a 3-(acyloxy)acyl derivative of bacterial toxin + H2O = a 3-hydroxyacyl derivative of bacterial toxin + a fatty acid + H(+). Functionally, removes the secondary (acyloxyacyl-linked) fatty acyl chains from the lipid A region of bacterial lipopolysaccharides (LPS). By breaking down LPS, terminates the host response to bacterial infection and prevents prolonged and damaging inflammatory responses. In peritoneal macrophages, seems to be important for recovery from a state of immune tolerance following infection by Gram-negative bacteria. This is Acyloxyacyl hydrolase from Oryctolagus cuniculus (Rabbit).